Consider the following 405-residue polypeptide: Mitochondrial outer membrane protein SLC25A46 (405 aa).

Residues 1-77 form a disordered region; it reads MTSRRPDSFE…PDEAQSAAPP (77 aa). The span at 22–37 shows a compositional bias: low complexity; that stretch reads FSGGYSGRSFNNSSSS. The stretch at 80 to 171 is one Solcar 1 repeat; it reads QLNRFAGFGI…GIISECTPLP (92 aa). 6 consecutive transmembrane segments (helical) span residues 87–107, 151–171, 183–203, 242–262, 302–322, and 371–391; these read FGIG…CIVF, FVVQ…TPLP, VVGH…FYSA, LLPL…HYII, FPEL…LFPL, and MGFY…ATVL. The Solcar 2 repeat unit spans residues 299 to 401; sequence DAYFPELMAS…QITKMIYSTL (103 aa).

Belongs to the mitochondrial carrier (TC 2.A.29) family.

It localises to the mitochondrion outer membrane. Its function is as follows. Transmembrane protein of the mitochondrial outer membrane that controls mitochondrial organization. May regulate the biogenesis and dynamics of mitochondrial cristae, the inwards folds of the inner mitochondrial membrane. Could regulate mitochondrial lipid homeostasis and thereby mitochondrial fission. The polypeptide is Mitochondrial outer membrane protein SLC25A46 (slc25a46) (Danio rerio (Zebrafish)).